A 143-amino-acid polypeptide reads, in one-letter code: Large ribosomal subunit protein uL11 (143 aa).

This sequence belongs to the universal ribosomal protein uL11 family. In terms of assembly, part of the ribosomal stalk of the 50S ribosomal subunit. Interacts with L10 and the large rRNA to form the base of the stalk. L10 forms an elongated spine to which L12 dimers bind in a sequential fashion forming a multimeric L10(L12)X complex. One or more lysine residues are methylated.

Functionally, forms part of the ribosomal stalk which helps the ribosome interact with GTP-bound translation factors. The polypeptide is Large ribosomal subunit protein uL11 (Rhizobium rhizogenes (strain K84 / ATCC BAA-868) (Agrobacterium radiobacter)).